We begin with the raw amino-acid sequence, 194 residues long: Adenine phosphoribosyltransferase (194 aa).

This sequence belongs to the purine/pyrimidine phosphoribosyltransferase family. In terms of assembly, homodimer.

Its subcellular location is the cytoplasm. It carries out the reaction AMP + diphosphate = 5-phospho-alpha-D-ribose 1-diphosphate + adenine. It functions in the pathway purine metabolism; AMP biosynthesis via salvage pathway; AMP from adenine: step 1/1. Catalyzes a salvage reaction resulting in the formation of AMP, that is energically less costly than de novo synthesis. The protein is Adenine phosphoribosyltransferase of Albidiferax ferrireducens (strain ATCC BAA-621 / DSM 15236 / T118) (Rhodoferax ferrireducens).